The sequence spans 460 residues: Hydroxymethylglutaryl-CoA synthase MYCGRDRAFT_54740 (460 aa).

Residue alanine 35 participates in (3S)-3-hydroxy-3-methylglutaryl-CoA binding. The active-site Proton donor/acceptor is glutamate 86. 8 residues coordinate (3S)-3-hydroxy-3-methylglutaryl-CoA: cysteine 120, asparagine 158, threonine 162, serine 212, histidine 262, lysine 271, asparagine 339, and serine 373. The active-site Acyl-thioester intermediate is cysteine 120. The active-site Proton donor/acceptor is the histidine 262.

This sequence belongs to the thiolase-like superfamily. HMG-CoA synthase family.

It carries out the reaction acetoacetyl-CoA + acetyl-CoA + H2O = (3S)-3-hydroxy-3-methylglutaryl-CoA + CoA + H(+). The protein operates within siderophore biosynthesis. Functionally, hydroxymethylglutaryl-CoA synthase involved in the biosynthesis of a ferrichrome A-like siderophors which may contribute to organismal virulence. The first step of siderophore biosynthesis is performed by the HMG-CoA synthase (HMGS) MYCGRDRAFT_54740 which catalyzes the generation of HMG-CoA and CoA using acetoacetyl-CoA and acetyl-CoA as substrates. The enoyl-CoA isomerase/hydratase MYCGRDRAFT_76805 then catalyzes the conversion of HMG-CoA to methylglutaconyl-CoA. The acyltransferase MYCGRDRAFT_85486 then fuses methylglutaconyl-CoA with hydroxyornithine to yield methylglutaconyl hydroxyornithine. Methylglutaconyl hydroxyornithine is then available for use by the nonribosomal peptide synthetase NRPS2 to generate the ferrichrome A-like siderophore. The polypeptide is Hydroxymethylglutaryl-CoA synthase MYCGRDRAFT_54740 (ERG13) (Zymoseptoria tritici (strain CBS 115943 / IPO323) (Speckled leaf blotch fungus)).